A 320-amino-acid chain; its full sequence is Lipoyl synthase (320 aa).

Residues C67, C72, C78, C93, C97, C100, and S307 each contribute to the [4Fe-4S] cluster site. The region spanning 79-296 (FNHGTATFMI…RTKAEVMGFE (218 aa)) is the Radical SAM core domain.

Belongs to the radical SAM superfamily. Lipoyl synthase family. The cofactor is [4Fe-4S] cluster.

It localises to the cytoplasm. The enzyme catalyses [[Fe-S] cluster scaffold protein carrying a second [4Fe-4S](2+) cluster] + N(6)-octanoyl-L-lysyl-[protein] + 2 oxidized [2Fe-2S]-[ferredoxin] + 2 S-adenosyl-L-methionine + 4 H(+) = [[Fe-S] cluster scaffold protein] + N(6)-[(R)-dihydrolipoyl]-L-lysyl-[protein] + 4 Fe(3+) + 2 hydrogen sulfide + 2 5'-deoxyadenosine + 2 L-methionine + 2 reduced [2Fe-2S]-[ferredoxin]. It participates in protein modification; protein lipoylation via endogenous pathway; protein N(6)-(lipoyl)lysine from octanoyl-[acyl-carrier-protein]: step 2/2. Functionally, catalyzes the radical-mediated insertion of two sulfur atoms into the C-6 and C-8 positions of the octanoyl moiety bound to the lipoyl domains of lipoate-dependent enzymes, thereby converting the octanoylated domains into lipoylated derivatives. The protein is Lipoyl synthase of Mannheimia succiniciproducens (strain KCTC 0769BP / MBEL55E).